A 340-amino-acid polypeptide reads, in one-letter code: Protein-arginine kinase (340 aa).

A Phosphagen kinase C-terminal domain is found at 21 to 242 (VVLSSRIRLA…EQIIMQERVA (222 aa)). ATP contacts are provided by residues 24 to 28 (SSRIR), histidine 79, arginine 113, 164 to 168 (RASVM), and 195 to 200 (RGIYGE).

This sequence belongs to the ATP:guanido phosphotransferase family.

It catalyses the reaction L-arginyl-[protein] + ATP = N(omega)-phospho-L-arginyl-[protein] + ADP + H(+). Catalyzes the specific phosphorylation of arginine residues in proteins. In Listeria monocytogenes serotype 4b (strain CLIP80459), this protein is Protein-arginine kinase.